The following is a 455-amino-acid chain: tRNA modification GTPase MnmE (455 aa).

3 residues coordinate (6S)-5-formyl-5,6,7,8-tetrahydrofolate: arginine 22, glutamate 85, and arginine 124. Residues 220–377 (GIYTVIVGRP…VEKAIKEAIL (158 aa)) enclose the TrmE-type G domain. Asparagine 230 contacts K(+). GTP-binding positions include 230–235 (NVGKSS), 249–255 (TDIPGTT), and 274–277 (DTAG). Serine 234 is a binding site for Mg(2+). K(+) contacts are provided by threonine 249, isoleucine 251, and threonine 254. Threonine 255 provides a ligand contact to Mg(2+). (6S)-5-formyl-5,6,7,8-tetrahydrofolate is bound at residue lysine 455.

The protein belongs to the TRAFAC class TrmE-Era-EngA-EngB-Septin-like GTPase superfamily. TrmE GTPase family. In terms of assembly, homodimer. Heterotetramer of two MnmE and two MnmG subunits. The cofactor is K(+).

The protein localises to the cytoplasm. Its function is as follows. Exhibits a very high intrinsic GTPase hydrolysis rate. Involved in the addition of a carboxymethylaminomethyl (cmnm) group at the wobble position (U34) of certain tRNAs, forming tRNA-cmnm(5)s(2)U34. The protein is tRNA modification GTPase MnmE of Caldicellulosiruptor saccharolyticus (strain ATCC 43494 / DSM 8903 / Tp8T 6331).